Reading from the N-terminus, the 304-residue chain is Homoserine O-acetyltransferase (304 aa).

Cysteine 142 acts as the Acyl-thioester intermediate in catalysis. Lysine 163 and serine 191 together coordinate substrate. The active-site Proton acceptor is histidine 234. Glutamate 236 is a catalytic residue. Residue arginine 248 participates in substrate binding.

It belongs to the MetA family.

Its subcellular location is the cytoplasm. The enzyme catalyses L-homoserine + acetyl-CoA = O-acetyl-L-homoserine + CoA. It participates in amino-acid biosynthesis; L-methionine biosynthesis via de novo pathway; O-acetyl-L-homoserine from L-homoserine: step 1/1. Transfers an acetyl group from acetyl-CoA to L-homoserine, forming acetyl-L-homoserine. This Thermotoga neapolitana (strain ATCC 49049 / DSM 4359 / NBRC 107923 / NS-E) protein is Homoserine O-acetyltransferase.